The primary structure comprises 244 residues: MKGIRKSILCLVLSAGVIAPVTTSIVQSPQKCYACTVDKGSYADTFTEFTNVEEAKKWGNAQYKKYGLSKPEQEAIKFYTRDASKINGPLRANQGNENGLPADILQKVKLIDQSFSKMKMPQNIILFRGDDPAYLGPEFQDKILNKDGTINKTVFEQVKAKFLKKDRTEYGYISTSLMSAQFGGRPIVTKFKVTNGSKGGYIDPISYFPGQLEVLLPRNNSYYISDMQISPNNRQIMITAMIFK.

An N-terminal signal peptide occupies residues 1 to 40 (MKGIRKSILCLVLSAGVIAPVTTSIVQSPQKCYACTVDKG). One can recognise a TR mART core domain in the interval 44 to 244 (DTFTEFTNVE…QIMITAMIFK (201 aa)). NAD(+)-binding positions include threonine 80, asparagine 87, arginine 91, 128 to 131 (RGDD), and 167 to 169 (RTE). Arginine 128 is a catalytic residue. The active site involves serine 174. Residues 182–185 (FGGR) and 211–213 (QLE) each bind NAD(+). Glutamate 213 is an active-site residue.

The protein to exoenzymes 3 of C.limosum and C.botulinum D phage, and to S.aureus ediN. In terms of assembly, monomer.

It localises to the secreted. The enzyme catalyses L-asparaginyl-[protein] + NAD(+) = N(4)-(ADP-D-ribosyl)-L-asparaginyl-[protein] + nicotinamide + H(+). ADP-ribosylates eukaryotic Rho and Rac proteins on an asparagine residue. This chain is Mono-ADP-ribosyltransferase C3, found in Clostridium botulinum C phage (Clostridium botulinum C bacteriophage).